We begin with the raw amino-acid sequence, 472 residues long: Adenosylhomocysteinase (472 aa).

Substrate is bound by residues Thr-60, Asp-136, and Glu-197. Residue 198–200 participates in NAD(+) binding; that stretch reads TTT. Positions 227 and 231 each coordinate substrate. NAD(+)-binding positions include Asn-232, 261–266, Glu-284, Asn-319, 340–342, and Asn-388; these read GYGDVG and IGH.

Belongs to the adenosylhomocysteinase family. Requires NAD(+) as cofactor.

Its subcellular location is the cytoplasm. It catalyses the reaction S-adenosyl-L-homocysteine + H2O = L-homocysteine + adenosine. Its pathway is amino-acid biosynthesis; L-homocysteine biosynthesis; L-homocysteine from S-adenosyl-L-homocysteine: step 1/1. May play a key role in the regulation of the intracellular concentration of adenosylhomocysteine. This Maridesulfovibrio salexigens (strain ATCC 14822 / DSM 2638 / NCIMB 8403 / VKM B-1763) (Desulfovibrio salexigens) protein is Adenosylhomocysteinase.